Here is a 380-residue protein sequence, read N- to C-terminus: Probable peptidoglycan glycosyltransferase FtsW (380 aa).

Helical transmembrane passes span 14-34, 52-72, 79-99, 112-131, 141-161, 162-182, 188-208, 268-288, 304-324, and 341-361; these read LLWCTLCLLLIGVTMVTSSSI, ILYLVILFFIFKIFLDVPISF, IILLISISTLLLVLIIGNSIH, MQPSELSKLAMFCYLSNYLS, FGGFLKPIIIISFPLILLLVE, PDLGTTIVILLTTLSLLFISG, FIPTILIIVVTTTVLIIKSPY, IIGEELGYIGACTILFMIFFI, IFFSGYFAFSIGLWLIFQTLI, and PLISYGGSSLIIVSIAIIILI.

Belongs to the SEDS family. FtsW subfamily.

The protein localises to the cell membrane. It catalyses the reaction [GlcNAc-(1-&gt;4)-Mur2Ac(oyl-L-Ala-gamma-D-Glu-L-Lys-D-Ala-D-Ala)](n)-di-trans,octa-cis-undecaprenyl diphosphate + beta-D-GlcNAc-(1-&gt;4)-Mur2Ac(oyl-L-Ala-gamma-D-Glu-L-Lys-D-Ala-D-Ala)-di-trans,octa-cis-undecaprenyl diphosphate = [GlcNAc-(1-&gt;4)-Mur2Ac(oyl-L-Ala-gamma-D-Glu-L-Lys-D-Ala-D-Ala)](n+1)-di-trans,octa-cis-undecaprenyl diphosphate + di-trans,octa-cis-undecaprenyl diphosphate + H(+). Its pathway is cell wall biogenesis; peptidoglycan biosynthesis. In terms of biological role, peptidoglycan polymerase that is essential for cell division. The sequence is that of Probable peptidoglycan glycosyltransferase FtsW from Buchnera aphidicola subsp. Baizongia pistaciae (strain Bp).